Consider the following 189-residue polypeptide: MLERLKKSLLEAPVFKRGEYDYFIHPITDGVPEIRPDLIREVTANIVRIANLDVDKIVTVEAMGIPIGIVLSILCDIPLVIIRKRKYGLPNEVEISQVTGYSRSQLYLNGINRGDRVIVVDDVISTGGTLQATLDSMELAGAEVMDTVIVVERGNGAELLRSKGYNLKTMVRVKVEGGRVSEVEPGISK.

Belongs to the purine/pyrimidine phosphoribosyltransferase family. Archaeal HPRT subfamily. In terms of assembly, homodimer.

The protein resides in the cytoplasm. It carries out the reaction IMP + diphosphate = hypoxanthine + 5-phospho-alpha-D-ribose 1-diphosphate. The catalysed reaction is GMP + diphosphate = guanine + 5-phospho-alpha-D-ribose 1-diphosphate. The protein operates within purine metabolism; IMP biosynthesis via salvage pathway; IMP from hypoxanthine: step 1/1. Functionally, catalyzes a salvage reaction resulting in the formation of IMP that is energically less costly than de novo synthesis. In Methanothrix soehngenii (strain ATCC 5969 / DSM 3671 / JCM 10134 / NBRC 103675 / OCM 69 / GP-6) (Methanosaeta concilii), this protein is Hypoxanthine/guanine phosphoribosyltransferase.